The chain runs to 112 residues: uncharacterized protein (112 aa).

A signal peptide spans 1 to 25 (MKGTKLAVVVGMTVAAVSLAAPAQA).

This is an uncharacterized protein from Mycobacterium tuberculosis (strain CDC 1551 / Oshkosh).